The chain runs to 214 residues: Adenylate kinase (214 aa).

Residue 10 to 15 (GTGKGT) coordinates ATP. The interval 30–59 (STGDILRENIQKKNTIGKKIHNILKNGELV) is NMP. Residues T31, R36, 57-59 (ELV), 85-88 (GFPR), and Q92 each bind AMP. The LID stretch occupies residues 122-159 (GRRVHTPSGRIYNINYNPPREEGKDDLTQEKLTIREDD). ATP contacts are provided by residues R123 and 132 to 133 (IY). Positions 156 and 167 each coordinate AMP. Q200 lines the ATP pocket.

It belongs to the adenylate kinase family. As to quaternary structure, monomer.

It is found in the cytoplasm. It carries out the reaction AMP + ATP = 2 ADP. Its pathway is purine metabolism; AMP biosynthesis via salvage pathway; AMP from ADP: step 1/1. Catalyzes the reversible transfer of the terminal phosphate group between ATP and AMP. Plays an important role in cellular energy homeostasis and in adenine nucleotide metabolism. This Buchnera aphidicola subsp. Schizaphis graminum (strain Sg) protein is Adenylate kinase.